Reading from the N-terminus, the 901-residue chain is Protein translocase subunit SecA (901 aa).

ATP-binding positions include Q87, 105 to 109, and D512; that span reads GEGKT. The tract at residues 855–891 is disordered; the sequence is QQLSHQDDETAAAAALAEQTGERKVGRNDPCPCGSGK. Residues C885, C887, C896, and H897 each coordinate Zn(2+).

It belongs to the SecA family. Monomer and homodimer. Part of the essential Sec protein translocation apparatus which comprises SecA, SecYEG and auxiliary proteins SecDF-YajC and YidC. It depends on Zn(2+) as a cofactor.

The protein resides in the cell inner membrane. It localises to the cytoplasm. The catalysed reaction is ATP + H2O + cellular proteinSide 1 = ADP + phosphate + cellular proteinSide 2.. In terms of biological role, part of the Sec protein translocase complex. Interacts with the SecYEG preprotein conducting channel. Has a central role in coupling the hydrolysis of ATP to the transfer of proteins into and across the cell membrane, serving both as a receptor for the preprotein-SecB complex and as an ATP-driven molecular motor driving the stepwise translocation of polypeptide chains across the membrane. This Cronobacter sakazakii (strain ATCC BAA-894) (Enterobacter sakazakii) protein is Protein translocase subunit SecA.